The chain runs to 200 residues: Large ribosomal subunit protein uL4 (200 aa).

The segment at 38 to 72 (GRQGSKQQKTRSDVSGGGKRPWRQKGTGRARAGTI) is disordered.

This sequence belongs to the universal ribosomal protein uL4 family. In terms of assembly, part of the 50S ribosomal subunit.

One of the primary rRNA binding proteins, this protein initially binds near the 5'-end of the 23S rRNA. It is important during the early stages of 50S assembly. It makes multiple contacts with different domains of the 23S rRNA in the assembled 50S subunit and ribosome. In terms of biological role, forms part of the polypeptide exit tunnel. This is Large ribosomal subunit protein uL4 from Pseudomonas fluorescens (strain ATCC BAA-477 / NRRL B-23932 / Pf-5).